The chain runs to 206 residues: Protease (206 aa).

Residues H55, D72, and C122 contribute to the active site.

The protein belongs to the peptidase C5 family. As to quaternary structure, interacts with protease cofactor pVI-C; this interaction is necessary for protease activation.

It localises to the virion. The protein resides in the host nucleus. It carries out the reaction Cleaves proteins of the adenovirus and its host cell at two consensus sites: -Yaa-Xaa-Gly-Gly-|-Xaa- and -Yaa-Xaa-Gly-Xaa-|-Gly- (in which Yaa is Met, Ile or Leu, and Xaa is any amino acid).. With respect to regulation, requires DNA and protease cofactor for maximal activation. Inside nascent virions, becomes partially activated by binding to the viral DNA, allowing it to cleave the cofactor that binds to the protease and fully activates it. Actin, like the viral protease cofactor, seems to act as a cofactor in the cleavage of cytokeratin 18 and of actin itself. Cleaves viral precursor proteins (pTP, pIIIa, pVI, pVII, pVIII, and pX) inside newly assembled particles giving rise to mature virions. Protease complexed to its cofactor slides along the viral DNA to specifically locate and cleave the viral precursors. Mature virions have a weakened organization compared to the unmature virions, thereby facilitating subsequent uncoating. Without maturation, the particle lacks infectivity and is unable to uncoat. Late in adenovirus infection, in the cytoplasm, may participate in the cytoskeleton destruction. Cleaves host cell cytoskeletal keratins K7 and K18. This is Protease from Fowl adenovirus A serotype 1 (strain CELO / Phelps) (FAdV-1).